A 311-amino-acid polypeptide reads, in one-letter code: HPr kinase/phosphorylase (311 aa).

Residues H139 and K160 contribute to the active site. 154–161 (GQSGVGKS) serves as a coordination point for ATP. Mg(2+) is bound at residue S161. D178 functions as the Proton acceptor; for phosphorylation activity. Proton donor; for dephosphorylation activity in the catalytic mechanism. The tract at residues 202 to 211 (LEIRGIGIID) is important for the catalytic mechanism of both phosphorylation and dephosphorylation. E203 lines the Mg(2+) pocket. R244 is a catalytic residue. Residues 265–270 (PVRPGR) are important for the catalytic mechanism of dephosphorylation.

This sequence belongs to the HPrK/P family. In terms of assembly, homohexamer. Mg(2+) is required as a cofactor.

It catalyses the reaction [HPr protein]-L-serine + ATP = [HPr protein]-O-phospho-L-serine + ADP + H(+). The catalysed reaction is [HPr protein]-O-phospho-L-serine + phosphate + H(+) = [HPr protein]-L-serine + diphosphate. Its function is as follows. Catalyzes the ATP- as well as the pyrophosphate-dependent phosphorylation of a specific serine residue in HPr, a phosphocarrier protein of the phosphoenolpyruvate-dependent sugar phosphotransferase system (PTS). HprK/P also catalyzes the pyrophosphate-producing, inorganic phosphate-dependent dephosphorylation (phosphorolysis) of seryl-phosphorylated HPr (P-Ser-HPr). The two antagonistic activities of HprK/P are regulated by several intracellular metabolites, which change their concentration in response to the absence or presence of rapidly metabolisable carbon sources (glucose, fructose, etc.) in the growth medium. Therefore, by controlling the phosphorylation state of HPr, HPrK/P is a sensor enzyme that plays a major role in the regulation of carbon metabolism and sugar transport: it mediates carbon catabolite repression (CCR), and regulates PTS-catalyzed carbohydrate uptake and inducer exclusion. The chain is HPr kinase/phosphorylase from Exiguobacterium sp. (strain ATCC BAA-1283 / AT1b).